The primary structure comprises 864 residues: Nitrate reductase [NADH] (864 aa).

C139 contacts Mo-molybdopterin. The 76-residue stretch at 497 to 572 (PRQYTMEEVA…LAQYYIGDLV (76 aa)) folds into the Cytochrome b5 heme-binding domain. 2 residues coordinate heme: H532 and H555. One can recognise an FAD-binding FR-type domain in the interval 606 to 718 (RQKVKLPLIE…KGPLGHFVYD (113 aa)). FAD is bound by residues 658-661 (RAYT), 675-679 (LIKVY), F680, F687, 692-694 (KMS), and T746.

The protein belongs to the nitrate reductase family. Homodimer. It depends on FAD as a cofactor. The cofactor is heme. Mo-molybdopterin is required as a cofactor.

It carries out the reaction nitrite + NAD(+) + H2O = nitrate + NADH + H(+). In terms of biological role, nitrate reductase is a key enzyme involved in the first step of nitrate assimilation in plants, fungi and bacteria. In Volvox carteri (Green alga), this protein is Nitrate reductase [NADH] (NITA).